The primary structure comprises 132 residues: Holo-[acyl-carrier-protein] synthase (132 aa).

The Mg(2+) site is built by Asp-8 and Glu-64.

Belongs to the P-Pant transferase superfamily. AcpS family. Mg(2+) serves as cofactor.

It localises to the cytoplasm. It catalyses the reaction apo-[ACP] + CoA = holo-[ACP] + adenosine 3',5'-bisphosphate + H(+). In terms of biological role, transfers the 4'-phosphopantetheine moiety from coenzyme A to a Ser of acyl-carrier-protein. The protein is Holo-[acyl-carrier-protein] synthase of Shewanella woodyi (strain ATCC 51908 / MS32).